We begin with the raw amino-acid sequence, 443 residues long: ATP-dependent protease ATPase subunit HslU (443 aa).

ATP-binding positions include I18, 60-65 (GVGKTE), D256, E321, and R393.

This sequence belongs to the ClpX chaperone family. HslU subfamily. A double ring-shaped homohexamer of HslV is capped on each side by a ring-shaped HslU homohexamer. The assembly of the HslU/HslV complex is dependent on binding of ATP.

It is found in the cytoplasm. In terms of biological role, ATPase subunit of a proteasome-like degradation complex; this subunit has chaperone activity. The binding of ATP and its subsequent hydrolysis by HslU are essential for unfolding of protein substrates subsequently hydrolyzed by HslV. HslU recognizes the N-terminal part of its protein substrates and unfolds these before they are guided to HslV for hydrolysis. This is ATP-dependent protease ATPase subunit HslU from Salmonella agona (strain SL483).